Here is a 224-residue protein sequence, read N- to C-terminus: 7-cyano-7-deazaguanine synthase (224 aa).

Residue 10–20 (LSGGLDSATVA) participates in ATP binding. Zn(2+)-binding residues include Cys189, Cys199, Cys202, and Cys205.

Belongs to the QueC family. Zn(2+) serves as cofactor.

The enzyme catalyses 7-carboxy-7-deazaguanine + NH4(+) + ATP = 7-cyano-7-deazaguanine + ADP + phosphate + H2O + H(+). The protein operates within purine metabolism; 7-cyano-7-deazaguanine biosynthesis. Its function is as follows. Catalyzes the ATP-dependent conversion of 7-carboxy-7-deazaguanine (CDG) to 7-cyano-7-deazaguanine (preQ(0)). The polypeptide is 7-cyano-7-deazaguanine synthase (Azotobacter vinelandii (strain DJ / ATCC BAA-1303)).